Reading from the N-terminus, the 412-residue chain is Major facilitator superfamily domain-containing protein 3 (412 aa).

A run of 12 helical transmembrane segments spans residues 10–30 (GLYLVQGLPYGLQSSLLPILL), 40–60 (VGLTKGLYAPWLLKLAWAPLV), 68–88 (VWLTLSTLSLGLVCGLLAVLP), 99–119 (TTVMGLLLLLNLGAAVQDVAL), 152–172 (GGLLVLFPTLSWPLLFLLLAA), 173–193 (TYWLAAALAWAAPALGRLPWP), 204–224 (YLLQDLLAVPGTLWTAGFVLT), 252–272 (LWSGLGAVTCSIAGSSLGGAL), 291–311 (LGSLACQTALLFHLNSPGASV), 320–340 (AVLLSLCLQQFFGGVVTTATF), 361–381 (FLATLELLGKLLLGTLAGVLA), and 384–404 (LGPHLCFAVFLVLSALPVLDL).

Belongs to the major facilitator superfamily. In terms of tissue distribution, in brain, expressed in the cortex, striatum, hippocampus, hypothalamus, thalamus and cerebellum (at protein level). Widely expressed with highest levels in kidney and liver.

The protein resides in the membrane. This chain is Major facilitator superfamily domain-containing protein 3 (Mfsd3), found in Mus musculus (Mouse).